Consider the following 671-residue polypeptide: ATP-dependent zinc metalloprotease FtsH (671 aa).

Residues 1–22 lie on the Cytoplasmic side of the membrane; the sequence is MANPNNNNDNKQNNNNNFFNDN. Residues 23-43 form a helical membrane-spanning segment; sequence PLLAFAIFSIVIILIFKSFVG. Over 44–130 the chain is Periplasmic; it reads EGESLGTMMN…ISYEGVVGNG (87 aa). Residues 131 to 151 traverse the membrane as a helical segment; that stretch reads FFSELISMMLPILIFFAIWIF. Residues 152-671 are Cytoplasmic-facing; that stretch reads LAKKMSKGMG…SEESDNNKEA (520 aa). ATP is bound at residue 224-231; that stretch reads GPPGTGKT. His447 contacts Zn(2+). Residue Glu448 is part of the active site. Positions 451 and 525 each coordinate Zn(2+). The disordered stretch occupies residues 630 to 671; that stretch reads EKGMPSRLAHKDKVAKNKAEADKKEEALKKEISEESDNNKEA.

The protein in the central section; belongs to the AAA ATPase family. In the C-terminal section; belongs to the peptidase M41 family. In terms of assembly, homohexamer. Zn(2+) is required as a cofactor.

Its subcellular location is the cell inner membrane. Its function is as follows. Acts as a processive, ATP-dependent zinc metallopeptidase for both cytoplasmic and membrane proteins. Plays a role in the quality control of integral membrane proteins. In Sulfurovum sp. (strain NBC37-1), this protein is ATP-dependent zinc metalloprotease FtsH.